The sequence spans 301 residues: Ribosomal protein L11 methyltransferase (301 aa).

The S-adenosyl-L-methionine site is built by Thr-146, Gly-167, Asp-189, and Asn-234.

It belongs to the methyltransferase superfamily. PrmA family.

It is found in the cytoplasm. It carries out the reaction L-lysyl-[protein] + 3 S-adenosyl-L-methionine = N(6),N(6),N(6)-trimethyl-L-lysyl-[protein] + 3 S-adenosyl-L-homocysteine + 3 H(+). In terms of biological role, methylates ribosomal protein L11. The sequence is that of Ribosomal protein L11 methyltransferase from Acinetobacter baumannii (strain AB307-0294).